We begin with the raw amino-acid sequence, 67 residues long: Light-harvesting protein B-870 alpha chain (67 aa).

The Cytoplasmic segment spans residues 1–12 (MWRIWRLFDPMR). The helical transmembrane segment at 13–33 (AMVAQAVFLLGLAVLIHLMLL) threads the bilayer. Residue histidine 29 participates in a bacteriochlorophyll binding. Topologically, residues 34 to 67 (GTNKYNWLDGAKKAPVATAVAPVPAEVTSLAQAK) are periplasmic.

The protein belongs to the antenna complex alpha subunit family. As to quaternary structure, an alpha/beta heterodimer. The core complex is formed by different alpha and beta chains, binding bacteriochlorophyll molecules, and arranged most probably in tetrameric structures disposed around the reaction center. The non-pigmented gamma chains may constitute additional components.

It is found in the cell inner membrane. Functionally, antenna complexes are light-harvesting systems, which transfer the excitation energy to the reaction centers. This Rubrivivax gelatinosus (strain NBRC 100245 / IL144) protein is Light-harvesting protein B-870 alpha chain (pufA).